A 298-amino-acid polypeptide reads, in one-letter code: Golgi to ER traffic protein 2 (298 aa).

Residues 1–164 are Cytoplasmic-facing; sequence MSEPVVDTAE…LEYNTYNQKL (164 aa). Residues 40–92 form a disordered region; that stretch reads ILSQGSSVKTSGVKSVLDQEKEATPSHDEDPEIQDITEITTPPPRTPPIGEDA. Low complexity predominate over residues 42–55; sequence SQGSSVKTSGVKSV. The segment covering 56–67 has biased composition (basic and acidic residues); that stretch reads LDQEKEATPSHD. Residues 165-185 form a helical membrane-spanning segment; the sequence is WKFRFLLVRVSVTLFNFFYHY. The Lumenal portion of the chain corresponds to 186–211; sequence INLSNFHASNYAYVRDLSSEKYPVRD. The helical transmembrane segment at 212–231 threads the bilayer; that stretch reads FFTWFATTEVVLVAAYYSIF. Over 232 to 275 the chain is Cytoplasmic; it reads HSLGLFHAANQNSFVLKAMSMGSMVLPQLEHYKPLVARFLGYYE. A helical transmembrane segment spans residues 276 to 296; sequence LLGIVLGDLSLVIVLFGLLSF. Over 297–298 the chain is Lumenal; it reads AN.

It belongs to the GET2 family. In terms of assembly, component of the Golgi to ER traffic (GET) complex, which is composed of GET1, GET2 and GET3. Within the complex, GET1 and GET2 form a heterotetramer which is stabilized by phosphatidylinositol binding and which binds to the GET3 homodimer.

It localises to the endoplasmic reticulum membrane. The protein resides in the golgi apparatus membrane. Its function is as follows. Required for the post-translational delivery of tail-anchored (TA) proteins to the endoplasmic reticulum. Together with GET1, acts as a membrane receptor for soluble GET3, which recognizes and selectively binds the transmembrane domain of TA proteins in the cytosol. The GET complex cooperates with the HDEL receptor ERD2 to mediate the ATP-dependent retrieval of resident ER proteins that contain a C-terminal H-D-E-L retention signal from the Golgi to the ER. This is Golgi to ER traffic protein 2 from Candida albicans (strain SC5314 / ATCC MYA-2876) (Yeast).